Consider the following 310-residue polypeptide: N-acetyl-gamma-glutamyl-phosphate reductase (310 aa).

The active site involves C117.

Belongs to the NAGSA dehydrogenase family. Type 2 subfamily.

The protein resides in the cytoplasm. It carries out the reaction N-acetyl-L-glutamate 5-semialdehyde + phosphate + NADP(+) = N-acetyl-L-glutamyl 5-phosphate + NADPH + H(+). Its pathway is amino-acid biosynthesis; L-arginine biosynthesis; N(2)-acetyl-L-ornithine from L-glutamate: step 3/4. Catalyzes the NADPH-dependent reduction of N-acetyl-5-glutamyl phosphate to yield N-acetyl-L-glutamate 5-semialdehyde. The sequence is that of N-acetyl-gamma-glutamyl-phosphate reductase from Rhizobium etli (strain ATCC 51251 / DSM 11541 / JCM 21823 / NBRC 15573 / CFN 42).